The sequence spans 72 residues: Large ribosomal subunit protein bL31c (72 aa).

This sequence belongs to the bacterial ribosomal protein bL31 family. Type A subfamily. Part of the 50S ribosomal subunit.

The protein localises to the plastid. The protein resides in the chloroplast. Functionally, binds the 23S rRNA. The chain is Large ribosomal subunit protein bL31c from Guillardia theta (Cryptophyte).